The sequence spans 383 residues: Mating-type protein MAT-1 (383 aa).

A DNA-binding region (alpha box) is located at residues 60–117; that stretch reads KARKALNAFVGFRCYYVTIPMFKSWPMKKLSNLIGLLWEADPNKSLWSLMAKAWSTIR.

Belongs to the MATALPHA1 family.

It is found in the nucleus. Mating type proteins are sequence specific DNA-binding proteins that act as master switches in fungal differentiation by controlling gene expression in a cell type-specific fashion. Transcriptional activator that induces the transcription of alpha-specific genes. The polypeptide is Mating-type protein MAT-1 (MAT1) (Cochliobolus heterostrophus (Southern corn leaf blight fungus)).